The primary structure comprises 68 residues: Large ribosomal subunit protein uL29 (68 aa).

Belongs to the universal ribosomal protein uL29 family.

This is Large ribosomal subunit protein uL29 from Chlorobaculum parvum (strain DSM 263 / NCIMB 8327) (Chlorobium vibrioforme subsp. thiosulfatophilum).